Here is a 181-residue protein sequence, read N- to C-terminus: Minor capsid protein P4 (181 aa).

Interacts with the major capsid protein.

Its subcellular location is the virion. In terms of biological role, one of the minor capsid proteins that constitute a network internal to the major capsid proteins and outside the lipid membrane. The minor capsid proteins glue and stabilize the capsomers. This is Minor capsid protein P4 from Chlorella (PBCV-1).